Here is a 266-residue protein sequence, read N- to C-terminus: Protein-ADP-ribose hydrolase (266 aa).

Residues 74 to 265 (TDLKDLKPIK…LYKEAFNRDA (192 aa)) form the Macro domain. 3 residues coordinate ADP-D-ribose: Asp93, Ile94, and Asn107. 3 residues coordinate Zn(2+): Cys113, His118, and Cys120. ADP-D-ribose is bound by residues Cys120, Ile121, Asp122, Ser212, Thr213, Gly214, and Phe216.

It belongs to the MacroD-type family. Zn-Macro subfamily. Zn(2+) is required as a cofactor.

The catalysed reaction is 4-O-(ADP-D-ribosyl)-L-aspartyl-[protein] + H2O = L-aspartyl-[protein] + ADP-D-ribose + H(+). In terms of biological role, ADP-ribosylhydrolase that specifically reverses the SirTM-mediated mono-ADP-ribosylation at an asparatate residue of GcvH-L, by releasing ADP-ribose from the target protein. May play a role in the regulation of the response to host-induced oxidative stress. The sequence is that of Protein-ADP-ribose hydrolase from Staphylococcus aureus (strain COL).